The chain runs to 365 residues: Flavone synthase (365 aa).

Fe cation is bound by residues His-76, His-218, Asp-220, and His-276. In terms of domain architecture, Fe2OG dioxygenase spans 194–295 (MEQKVLINYY…RLSIATFQNP (102 aa)). The segment at 345-365 (RLQDEKAKLEMKSKSADENLA) is disordered.

The protein belongs to the iron/ascorbate-dependent oxidoreductase family. It depends on Fe cation as a cofactor. The cofactor is L-ascorbate.

It localises to the cytoplasm. It catalyses the reaction a flavanone + 2-oxoglutarate + O2 = a flavone + succinate + CO2 + H2O. It functions in the pathway secondary metabolite biosynthesis; flavonoid biosynthesis. Functionally, involved in the conversion of naringenin to apigenin. Acts via a direct 2,3-desaturation of flavanones instead of a sequential hydroxylation/dehydratation mechanism. This chain is Flavone synthase (FNSI), found in Petroselinum crispum (Parsley).